Reading from the N-terminus, the 292-residue chain is GTP cyclohydrolase FolE2 (292 aa).

This sequence belongs to the GTP cyclohydrolase IV family.

It catalyses the reaction GTP + H2O = 7,8-dihydroneopterin 3'-triphosphate + formate + H(+). It functions in the pathway cofactor biosynthesis; 7,8-dihydroneopterin triphosphate biosynthesis; 7,8-dihydroneopterin triphosphate from GTP: step 1/1. Converts GTP to 7,8-dihydroneopterin triphosphate. In Staphylococcus aureus (strain Newman), this protein is GTP cyclohydrolase FolE2.